The chain runs to 114 residues: Hydrogenase maturation factor HypA (114 aa).

Position 2 (H2) interacts with Ni(2+). Positions 70, 73, 86, and 89 each coordinate Zn(2+).

It belongs to the HypA/HybF family.

Its function is as follows. Involved in the maturation of [NiFe] hydrogenases. Required for nickel insertion into the metal center of the hydrogenase. The protein is Hydrogenase maturation factor HypA of Crocosphaera subtropica (strain ATCC 51142 / BH68) (Cyanothece sp. (strain ATCC 51142)).